The following is a 232-amino-acid chain: 5'-methylthioadenosine/S-adenosylhomocysteine nucleosidase (232 aa).

Glutamate 12 acts as the Proton acceptor in catalysis. Residues glycine 78, isoleucine 152, and 173–174 (ME) contribute to the substrate site. Catalysis depends on aspartate 197, which acts as the Proton donor.

Belongs to the PNP/UDP phosphorylase family. MtnN subfamily. In terms of assembly, homodimer.

It carries out the reaction S-adenosyl-L-homocysteine + H2O = S-(5-deoxy-D-ribos-5-yl)-L-homocysteine + adenine. It catalyses the reaction S-methyl-5'-thioadenosine + H2O = 5-(methylsulfanyl)-D-ribose + adenine. The catalysed reaction is 5'-deoxyadenosine + H2O = 5-deoxy-D-ribose + adenine. The protein operates within amino-acid biosynthesis; L-methionine biosynthesis via salvage pathway; S-methyl-5-thio-alpha-D-ribose 1-phosphate from S-methyl-5'-thioadenosine (hydrolase route): step 1/2. Catalyzes the irreversible cleavage of the glycosidic bond in both 5'-methylthioadenosine (MTA) and S-adenosylhomocysteine (SAH/AdoHcy) to adenine and the corresponding thioribose, 5'-methylthioribose and S-ribosylhomocysteine, respectively. Also cleaves 5'-deoxyadenosine, a toxic by-product of radical S-adenosylmethionine (SAM) enzymes, into 5-deoxyribose and adenine. Thus, is required for in vivo function of the radical SAM enzymes biotin synthase and lipoic acid synthase, that are inhibited by 5'-deoxyadenosine accumulation. This chain is 5'-methylthioadenosine/S-adenosylhomocysteine nucleosidase, found in Salmonella paratyphi A (strain ATCC 9150 / SARB42).